Reading from the N-terminus, the 217-residue chain is Protein-methionine-sulfoxide reductase heme-binding subunit MsrQ (217 aa).

4 helical membrane passes run 82–102, 118–138, 150–170, and 180–200; these read MLGLYTFFYGTLHFLIWLLVD, PFITVGFAAFVLMIPLAATST, WQWLHRLVYVTGVLGILHYWW, and EVSIYAAVMAVLLGLRVWWVW.

This sequence belongs to the MsrQ family. As to quaternary structure, heterodimer of a catalytic subunit (MsrP) and a heme-binding subunit (MsrQ). FMN is required as a cofactor. Heme b serves as cofactor.

The protein localises to the cell inner membrane. Its function is as follows. Part of the MsrPQ system that repairs oxidized periplasmic proteins containing methionine sulfoxide residues (Met-O), using respiratory chain electrons. Thus protects these proteins from oxidative-stress damage caused by reactive species of oxygen and chlorine generated by the host defense mechanisms. MsrPQ is essential for the maintenance of envelope integrity under bleach stress, rescuing a wide series of structurally unrelated periplasmic proteins from methionine oxidation. MsrQ provides electrons for reduction to the reductase catalytic subunit MsrP, using the quinone pool of the respiratory chain. The chain is Protein-methionine-sulfoxide reductase heme-binding subunit MsrQ from Ralstonia nicotianae (strain ATCC BAA-1114 / GMI1000) (Ralstonia solanacearum).